A 137-amino-acid chain; its full sequence is Large ribosomal subunit protein uL16 (137 aa).

Residues 1–17 are compositionally biased toward basic residues; that stretch reads MLQPKRTKFRKQMKGRN. The segment at 1–22 is disordered; that stretch reads MLQPKRTKFRKQMKGRNRGLAQ.

The protein belongs to the universal ribosomal protein uL16 family. Part of the 50S ribosomal subunit.

Binds 23S rRNA and is also seen to make contacts with the A and possibly P site tRNAs. The sequence is that of Large ribosomal subunit protein uL16 from Teredinibacter turnerae (strain ATCC 39867 / T7901).